Consider the following 640-residue polypeptide: Phosphomethylpyrimidine synthase (640 aa).

Substrate is bound by residues Asn235, Met264, Tyr293, His329, 349 to 351 (SRG), 390 to 393 (DGLR), and Glu429. Zn(2+) is bound at residue His433. Tyr456 provides a ligand contact to substrate. A Zn(2+)-binding site is contributed by His497. [4Fe-4S] cluster-binding residues include Cys577, Cys580, and Cys585.

This sequence belongs to the ThiC family. As to quaternary structure, homodimer. [4Fe-4S] cluster serves as cofactor.

The enzyme catalyses 5-amino-1-(5-phospho-beta-D-ribosyl)imidazole + S-adenosyl-L-methionine = 4-amino-2-methyl-5-(phosphooxymethyl)pyrimidine + CO + 5'-deoxyadenosine + formate + L-methionine + 3 H(+). It functions in the pathway cofactor biosynthesis; thiamine diphosphate biosynthesis. In terms of biological role, catalyzes the synthesis of the hydroxymethylpyrimidine phosphate (HMP-P) moiety of thiamine from aminoimidazole ribotide (AIR) in a radical S-adenosyl-L-methionine (SAM)-dependent reaction. The protein is Phosphomethylpyrimidine synthase of Photobacterium profundum (strain SS9).